The sequence spans 518 residues: Protein translocase subunit SecD (518 aa).

The next 6 membrane-spanning stretches (helical) occupy residues 9-29 (IFLS…NFMQ), 361-381 (LIGF…LGLF), 384-404 (IALS…QATL), 406-426 (LPGI…NVLI), 452-474 (FATI…IFGV), and 486-506 (IGII…IDIW).

Belongs to the SecD/SecF family. SecD subfamily. Forms a complex with SecF. Part of the essential Sec protein translocation apparatus which comprises SecA, SecYEG and auxiliary proteins SecDF-YajC and YidC.

It is found in the cell inner membrane. In terms of biological role, part of the Sec protein translocase complex. Interacts with the SecYEG preprotein conducting channel. SecDF uses the proton motive force (PMF) to complete protein translocation after the ATP-dependent function of SecA. This Rickettsia felis (strain ATCC VR-1525 / URRWXCal2) (Rickettsia azadi) protein is Protein translocase subunit SecD.